We begin with the raw amino-acid sequence, 181 residues long: ATP synthase subunit delta (181 aa).

It belongs to the ATPase delta chain family. F-type ATPases have 2 components, F(1) - the catalytic core - and F(0) - the membrane proton channel. F(1) has five subunits: alpha(3), beta(3), gamma(1), delta(1), epsilon(1). F(0) has three main subunits: a(1), b(2) and c(10-14). The alpha and beta chains form an alternating ring which encloses part of the gamma chain. F(1) is attached to F(0) by a central stalk formed by the gamma and epsilon chains, while a peripheral stalk is formed by the delta and b chains.

Its subcellular location is the cell membrane. Its function is as follows. F(1)F(0) ATP synthase produces ATP from ADP in the presence of a proton or sodium gradient. F-type ATPases consist of two structural domains, F(1) containing the extramembraneous catalytic core and F(0) containing the membrane proton channel, linked together by a central stalk and a peripheral stalk. During catalysis, ATP synthesis in the catalytic domain of F(1) is coupled via a rotary mechanism of the central stalk subunits to proton translocation. In terms of biological role, this protein is part of the stalk that links CF(0) to CF(1). It either transmits conformational changes from CF(0) to CF(1) or is implicated in proton conduction. The chain is ATP synthase subunit delta from Mycoplasmoides gallisepticum (strain R(low / passage 15 / clone 2)) (Mycoplasma gallisepticum).